The following is a 121-amino-acid chain: Large ribosomal subunit protein uL14 (121 aa).

The protein belongs to the universal ribosomal protein uL14 family. In terms of assembly, part of the 50S ribosomal subunit. Forms a cluster with proteins L3 and L19. In the 70S ribosome, L14 and L19 interact and together make contacts with the 16S rRNA in bridges B5 and B8.

Functionally, binds to 23S rRNA. Forms part of two intersubunit bridges in the 70S ribosome. The polypeptide is Large ribosomal subunit protein uL14 (Opitutus terrae (strain DSM 11246 / JCM 15787 / PB90-1)).